We begin with the raw amino-acid sequence, 269 residues long: tRNA pseudouridine synthase A (269 aa).

Catalysis depends on Asp51, which acts as the Nucleophile. A substrate-binding site is contributed by Tyr109.

This sequence belongs to the tRNA pseudouridine synthase TruA family. As to quaternary structure, homodimer.

It carries out the reaction uridine(38/39/40) in tRNA = pseudouridine(38/39/40) in tRNA. In terms of biological role, formation of pseudouridine at positions 38, 39 and 40 in the anticodon stem and loop of transfer RNAs. The polypeptide is tRNA pseudouridine synthase A (Histophilus somni (strain 2336) (Haemophilus somnus)).